We begin with the raw amino-acid sequence, 80 residues long: Lantibiotic Flvalpha.a (80 aa).

A propeptide spans 1 to 38 (MNKNPIYRSEEEAKDIACGNVAAELDENSQALDAINGA) (cleaved by FlvT). Residues Thr43 and Thr47 each carry the 2,3-didehydrobutyrine; by FlvM1 modification. Positions 52 to 55 (TVGC) form a cross-link, beta-methyllanthionine (Thr-Cys); by FlvM1. Positions 58–68 (SYGLGNGGYCC) form a cross-link, lanthionine (Ser-Cys); by FlvM1. 2 cross-links (beta-methyllanthionine (Thr-Cys); by FlvM1) span residues 69-74 (TYTVEC) and 71-78 (TVECSKTC).

In terms of processing, the lanthionine formed by Ser-58 and Cys-68 forms a putative lipid II binding motif. Maturation of FlvA1 peptides involves the enzymatic conversion of Thr, and Ser into dehydrated AA and the formation of thioether bonds with cysteines. Modifications are processed by the flavecin synthetase FlvM1. This is followed by membrane translocation and cleavage of the modified precursor. Post-translationally, contains DL-lanthionine and DL-beta-methyllanthionine, when coepressed in E.coli with the flavecin synthetase FlvM1.

Its subcellular location is the secreted. Functionally, lanthionine-containing peptide antibiotic (lantibiotic) only active on Gram-positive bacteria in synergy with Flvbeta peptides, which are encoded by the same operon than Flvalpha.a. Shows antibacterial activity in synergy with Flvbeta.b, Flvbeta.c, Flvbeta.e and Flvbeta.g. Does not show antibacterial activity when tested with Flvbeta.a, Flvbeta.d, Flvbeta.f and Flvbeta.h. The bactericidal activity of lantibiotics is based on depolarization of energized bacterial cytoplasmic membranes, initiated by the formation of aqueous transmembrane pores. In Ruminococcus flavefaciens, this protein is Lantibiotic Flvalpha.a.